A 299-amino-acid polypeptide reads, in one-letter code: Prohibitin-2 (299 aa).

N-acetylalanine is present on A2. The segment at M19–A49 is necessary for transcriptional repression. Y128 carries the phosphotyrosine modification. Position 147 is an N6-acetyllysine (K147). The interval A150–D174 is necessary for transcriptional repression. S151 bears the Phosphoserine mark. Residues S190 to L238 are a coiled coil. 4 positions are modified to N6-acetyllysine: K200, K236, K250, and K262.

It belongs to the prohibitin family. In terms of assembly, the mitochondrial prohibitin complex consists of two subunits (PHB1 and PHB2), assembled into a membrane-associated ring-shaped supercomplex of approximately 1 mDa. Interacts with ESR1, HDAC1 and HDAC5. Interacts with ZNF703. Interacts with STOML2. Interacts with ARFGEF3. Interacts with SPHK2. Interacts with COX4I1; the interaction associates PHB2 with COX. Interacts with MAP1LC3B (membrane-bound form LC3-II); the interaction is direct and upon mitochondrial depolarization and proteasome-dependent outer membrane rupture. Interacts with IGFBP6 (via C-terminal domain). Interacts with CLPB. Interacts with CD86 (via cytoplasmic domain); the interactions increases after priming with CD40. Interacts with AFG3L2. Interacts with DNAJC19. Interacts with AKT2; this interaction may be important for myogenic differentiation. Post-translationally, phosphorylated. Tyrosine phosphorylation is indirectly stimulated by IGFBP6.

It localises to the mitochondrion inner membrane. The protein localises to the cytoplasm. The protein resides in the nucleus. It is found in the cell membrane. In terms of biological role, protein with pleiotropic attributes mediated in a cell-compartment- and tissue-specific manner, which include the plasma membrane-associated cell signaling functions, mitochondrial chaperone, and transcriptional co-regulator of transcription factors and sex steroid hormones in the nucleus. Its function is as follows. In the mitochondria, together with PHB, forms large ring complexes (prohibitin complexes) in the inner mitochondrial membrane (IMM) and functions as a chaperone protein that stabilizes mitochondrial respiratory enzymes and maintains mitochondrial integrity in the IMM, which is required for mitochondrial morphogenesis, neuronal survival, and normal lifespan. The prohibitin complex, with DNAJC19, regulates cardiolipin remodeling and the protein turnover of OMA1 in a cardiolipin-binding manner. Also regulates cytochrome-c oxidase assembly (COX) and mitochondrial respiration. Binding to sphingoid 1-phosphate (SPP) modulates its regulator activity. Has a key role of mitophagy receptor involved in targeting mitochondria for autophagic degradation. Involved in mitochondrial-mediated antiviral innate immunity, activates RIG-I-mediated signal transduction and production of IFNB1 and pro-inflammatory cytokine IL6. Functionally, in the nucleus, serves as transcriptional co-regulator. Acts as a mediator of transcriptional repression by nuclear hormone receptors via recruitment of histone deacetylases. Functions as an estrogen receptor (ER)-selective coregulator that potentiates the inhibitory activities of antiestrogens and represses the activity of estrogens. Competes with NCOA1 for modulation of ER transcriptional activity. In the plasma membrane, is involved in IGFBP6-induced cell migration. Cooperates with CD86 to mediate CD86-signaling in B lymphocytes that regulates the level of IgG1 produced through the activation of distal signaling intermediates. Upon CD40 engagement, required to activate NF-kappa-B signaling pathway via phospholipase C and protein kinase C activation. This Rattus norvegicus (Rat) protein is Prohibitin-2.